The following is a 199-amino-acid chain: Ribosome maturation factor RimM (199 aa).

A PRC barrel domain is found at 95 to 168; sequence EDEFYHADLV…FVRVDPVAAG (74 aa). The segment at 167-199 is disordered; sequence AGLVEDEDGDAPREEDFDPKGRPRGPRDAGGNR. Residues 176 to 193 are compositionally biased toward basic and acidic residues; the sequence is DAPREEDFDPKGRPRGPR.

Belongs to the RimM family. In terms of assembly, binds ribosomal protein uS19.

It is found in the cytoplasm. In terms of biological role, an accessory protein needed during the final step in the assembly of 30S ribosomal subunit, possibly for assembly of the head region. Essential for efficient processing of 16S rRNA. May be needed both before and after RbfA during the maturation of 16S rRNA. It has affinity for free ribosomal 30S subunits but not for 70S ribosomes. This is Ribosome maturation factor RimM from Mesorhizobium japonicum (strain LMG 29417 / CECT 9101 / MAFF 303099) (Mesorhizobium loti (strain MAFF 303099)).